We begin with the raw amino-acid sequence, 61 residues long: UPF0391 membrane protein Pnap_0032 (61 aa).

Transmembrane regions (helical) follow at residues 5–25 (AIIFAVISLIAGALGFSGVAA) and 33–53 (VLFGLFLILAVIFIVLAALGV).

It belongs to the UPF0391 family.

Its subcellular location is the cell membrane. The polypeptide is UPF0391 membrane protein Pnap_0032 (Polaromonas naphthalenivorans (strain CJ2)).